Consider the following 306-residue polypeptide: Lipoyl synthase 2 (306 aa).

[4Fe-4S] cluster-binding residues include Cys-49, Cys-54, Cys-60, Cys-75, Cys-79, Cys-82, and Ser-300. The 229-residue stretch at 61 to 289 folds into the Radical SAM core domain; that stretch reads YAAGTATFLL…AEVACKLGFA (229 aa).

It belongs to the radical SAM superfamily. Lipoyl synthase family. Requires [4Fe-4S] cluster as cofactor.

Its subcellular location is the cytoplasm. It carries out the reaction [[Fe-S] cluster scaffold protein carrying a second [4Fe-4S](2+) cluster] + N(6)-octanoyl-L-lysyl-[protein] + 2 oxidized [2Fe-2S]-[ferredoxin] + 2 S-adenosyl-L-methionine + 4 H(+) = [[Fe-S] cluster scaffold protein] + N(6)-[(R)-dihydrolipoyl]-L-lysyl-[protein] + 4 Fe(3+) + 2 hydrogen sulfide + 2 5'-deoxyadenosine + 2 L-methionine + 2 reduced [2Fe-2S]-[ferredoxin]. The protein operates within protein modification; protein lipoylation via endogenous pathway; protein N(6)-(lipoyl)lysine from octanoyl-[acyl-carrier-protein]: step 2/2. In terms of biological role, catalyzes the radical-mediated insertion of two sulfur atoms into the C-6 and C-8 positions of the octanoyl moiety bound to the lipoyl domains of lipoate-dependent enzymes, thereby converting the octanoylated domains into lipoylated derivatives. The polypeptide is Lipoyl synthase 2 (Prochlorococcus marinus (strain MIT 9313)).